A 389-amino-acid chain; its full sequence is Aromatic-amino-acid aminotransferase 2 (389 aa).

Lys-233 is subject to N6-(pyridoxal phosphate)lysine.

Belongs to the class-I pyridoxal-phosphate-dependent aminotransferase family. Homodimer. It depends on pyridoxal 5'-phosphate as a cofactor.

The enzyme catalyses an aromatic L-alpha-amino acid + 2-oxoglutarate = an aromatic oxo-acid + L-glutamate. Functionally, catalyzes the transamination of phenylalanine, tyrosine and tryptophan. Shows virtually no activity towards aspartic acid, alanine, valine or isoleucine. This Thermococcus litoralis (strain ATCC 51850 / DSM 5473 / JCM 8560 / NS-C) protein is Aromatic-amino-acid aminotransferase 2.